Reading from the N-terminus, the 163-residue chain is uncharacterized protein (163 aa).

A helical membrane pass occupies residues 7-23 (TLVAFIATFFNLAATSI).

The protein localises to the membrane. This is an uncharacterized protein from Saccharomyces cerevisiae (strain ATCC 204508 / S288c) (Baker's yeast).